The sequence spans 394 residues: ATP phosphoribosyltransferase regulatory subunit (394 aa).

The protein belongs to the class-II aminoacyl-tRNA synthetase family. HisZ subfamily. Heteromultimer composed of HisG and HisZ subunits.

The protein localises to the cytoplasm. It participates in amino-acid biosynthesis; L-histidine biosynthesis; L-histidine from 5-phospho-alpha-D-ribose 1-diphosphate: step 1/9. Its function is as follows. Required for the first step of histidine biosynthesis. May allow the feedback regulation of ATP phosphoribosyltransferase activity by histidine. In Pseudomonas paraeruginosa (strain DSM 24068 / PA7) (Pseudomonas aeruginosa (strain PA7)), this protein is ATP phosphoribosyltransferase regulatory subunit.